A 432-amino-acid polypeptide reads, in one-letter code: Trigger factor (432 aa).

The region spanning 161–246 is the PPIase FKBP-type domain; that stretch reads EDRVTIDFTG…LKKVEERELP (86 aa).

The protein belongs to the FKBP-type PPIase family. Tig subfamily.

It is found in the cytoplasm. It catalyses the reaction [protein]-peptidylproline (omega=180) = [protein]-peptidylproline (omega=0). Involved in protein export. Acts as a chaperone by maintaining the newly synthesized protein in an open conformation. Functions as a peptidyl-prolyl cis-trans isomerase. The chain is Trigger factor from Klebsiella pneumoniae subsp. pneumoniae (strain ATCC 700721 / MGH 78578).